Here is an 856-residue protein sequence, read N- to C-terminus: Inactive rhomboid protein 1 (856 aa).

Residues 1 to 20 form a disordered region; it reads MSEARRDSTSSLQRKKPPWL. At 1 to 412 the chain is on the cytoplasmic side; that stretch reads MSEARRDSTS…HRPFFTYWLT (412 aa). Phosphoserine occurs at positions 76 and 176. Phosphothreonine is present on residues T180 and T183. S391 bears the Phosphoserine mark. The helical transmembrane segment at 413-433 threads the bilayer; sequence FVHSLVTILAVCIYGIAPVGF. At 434–656 the chain is on the lumenal side; sequence SQHETVDSVL…NPEVPDQFYR (223 aa). N584 carries an N-linked (GlcNAc...) asparagine glycan. The chain crosses the membrane as a helical span at residues 657–677; it reads LWLSLFLHAGILHCLVSVCFQ. Over 678–692 the chain is Cytoplasmic; the sequence is MTVLRDLEKLAGWHR. Residues 693-713 form a helical membrane-spanning segment; it reads IAIIYLLSGVTGNLASAIFLP. Over 714 to 715 the chain is Lumenal; that stretch reads YR. A helical membrane pass occupies residues 716–736; the sequence is AEVGPAGSQFGILACLFVELF. The Cytoplasmic portion of the chain corresponds to 737 to 747; sequence QSWQILARPWR. The helical transmembrane segment at 748–768 threads the bilayer; that stretch reads AFFKLLAVVLFLFAFGLLPWI. Residues 769–773 are Lumenal-facing; the sequence is DNFAH. Residues 774 to 794 form a helical membrane-spanning segment; the sequence is ISGFVSGLFLSFAFLPYISFG. At 795–804 the chain is on the cytoplasmic side; that stretch reads KFDLYRKRCQ. A helical transmembrane segment spans residues 805–825; that stretch reads IIIFQAVFLGLLAGLVVLFYF. Residues 826 to 856 are Lumenal-facing; the sequence is YPVRCEWCEFLTCIPFTDKFCEKYELDAQLH.

It belongs to the peptidase S54 family. Homodimer, or homooligomer. Interacts with TGFA and HBEGF. Interacts with EGF; may retain EGF in the endoplasmic reticulum and regulates its degradation through the endoplasmic reticulum-associated degradation (ERAD). Interacts (via cytoplasmic N-terminus) with FRMD8/iTAP; this interaction leads to mutual protein stabilization. Interacts with ADAM17/TACE.

The protein localises to the endoplasmic reticulum membrane. It is found in the golgi apparatus membrane. Regulates ADAM17 protease, a sheddase of the epidermal growth factor (EGF) receptor ligands and TNF, thereby plays a role in sleep, cell survival, proliferation, migration and inflammation. Does not exhibit any protease activity on its own. The sequence is that of Inactive rhomboid protein 1 (Rhbdf1) from Rattus norvegicus (Rat).